Here is a 314-residue protein sequence, read N- to C-terminus: MKKNPKISLIGSGNIGGMLAHLISLKNLGDIVLFDVAEGIPQGKALDIMQANTLAGSDIKIKGTNDYKDIEGSDAIIITAGLPRKPGMSRDDLISVNTGIMKSVAENVKKYAPNAFVIVITNPLDVMVYVMLKESGLPHNKVIGMAGVLDSSRFNFFLAEEFKVSTNSVSSIVLGGHGDAMVPLARYSTVKGVPIPDLVKMGLSTNERIEKIIDRTRNGGGEIVALLKTGSAYYAPAASAVEMLESYLQDKRQILTCAAYLQGEYGVKDLYAGVPIIIGKNGVEKVIELQLTTNEQALFDKSVDGVRKLIEAVK.

NAD(+) contacts are provided by residues 11–16 (GSGNIG) and aspartate 35. Arginine 84 and arginine 90 together coordinate substrate. NAD(+) contacts are provided by residues asparagine 97 and 120–122 (ITN). Residues asparagine 122 and arginine 153 each coordinate substrate. Residue histidine 177 is the Proton acceptor of the active site.

The protein belongs to the LDH/MDH superfamily. MDH type 3 family.

The catalysed reaction is (S)-malate + NAD(+) = oxaloacetate + NADH + H(+). Its function is as follows. Catalyzes the reversible oxidation of malate to oxaloacetate. This is Malate dehydrogenase from Rickettsia bellii (strain OSU 85-389).